Here is a 118-residue protein sequence, read N- to C-terminus: Small ribosomal subunit protein uS13 (118 aa).

Positions 94 to 118 are disordered; the sequence is SLPLRGQRTKTNARTRKGPRKPIKK.

This sequence belongs to the universal ribosomal protein uS13 family. Part of the 30S ribosomal subunit. Forms a loose heterodimer with protein S19. Forms two bridges to the 50S subunit in the 70S ribosome.

Located at the top of the head of the 30S subunit, it contacts several helices of the 16S rRNA. In the 70S ribosome it contacts the 23S rRNA (bridge B1a) and protein L5 of the 50S subunit (bridge B1b), connecting the 2 subunits; these bridges are implicated in subunit movement. Contacts the tRNAs in the A and P-sites. The chain is Small ribosomal subunit protein uS13 from Idiomarina loihiensis (strain ATCC BAA-735 / DSM 15497 / L2-TR).